A 399-amino-acid chain; its full sequence is Long-chain primary alcohol dehydrogenase AdhA (399 aa).

The protein belongs to the iron-containing alcohol dehydrogenase family. Homotetramer. Zn(2+) is required as a cofactor.

It catalyses the reaction a primary alcohol + NADP(+) = an aldehyde + NADPH + H(+). Its function is as follows. Alcohol dehydrogenase active against primary long-chain alcohols. Pentan-1-ol is the optimum substrate in vitro, but also shows efficient dehydrogenase activity on propanol, hexanol, and ethanol. The polypeptide is Long-chain primary alcohol dehydrogenase AdhA (adhA) (Thermoanaerobacter ethanolicus (Clostridium thermohydrosulfuricum)).